Here is a 230-residue protein sequence, read N- to C-terminus: NAD(P)H-hydrate epimerase (230 aa).

Positions alanine 11–leucine 218 constitute a YjeF N-terminal domain. Asparagine 61–aspartate 65 is a (6S)-NADPHX binding site. Positions 62 and 126 each coordinate K(+). (6S)-NADPHX contacts are provided by residues glycine 130 to proline 136 and aspartate 159. Serine 162 is a K(+) binding site.

Belongs to the NnrE/AIBP family. K(+) serves as cofactor.

The enzyme catalyses (6R)-NADHX = (6S)-NADHX. The catalysed reaction is (6R)-NADPHX = (6S)-NADPHX. Its function is as follows. Catalyzes the epimerization of the S- and R-forms of NAD(P)HX, a damaged form of NAD(P)H that is a result of enzymatic or heat-dependent hydration. This is a prerequisite for the S-specific NAD(P)H-hydrate dehydratase to allow the repair of both epimers of NAD(P)HX. In Drosophila melanogaster (Fruit fly), this protein is NAD(P)H-hydrate epimerase.